The chain runs to 86 residues: MHAYVYKSQRKQDTFVYLATRDDFSVIPADVQARLAPFAFVLDVALTPERRLAQADADTVRAALASHGFYLQLPKTVVLAGECDYD.

Residues Met1–Cys83 form the YcgL domain.

This is YcgL domain-containing protein XC_4086 from Xanthomonas campestris pv. campestris (strain 8004).